The following is a 588-amino-acid chain: Aspartate--tRNA ligase (588 aa).

Position 174 (Glu-174) interacts with L-aspartate. The tract at residues 198 to 201 (QLFK) is aspartate. Residue Arg-220 coordinates L-aspartate. ATP contacts are provided by residues 220 to 222 (RDE) and Gln-229. His-448 contributes to the L-aspartate binding site. Residue Glu-482 participates in ATP binding. Position 489 (Arg-489) interacts with L-aspartate. 534-537 (GIDR) is an ATP binding site.

Belongs to the class-II aminoacyl-tRNA synthetase family. Type 1 subfamily. Homodimer.

It localises to the cytoplasm. It catalyses the reaction tRNA(Asp) + L-aspartate + ATP = L-aspartyl-tRNA(Asp) + AMP + diphosphate. Its function is as follows. Catalyzes the attachment of L-aspartate to tRNA(Asp) in a two-step reaction: L-aspartate is first activated by ATP to form Asp-AMP and then transferred to the acceptor end of tRNA(Asp). The chain is Aspartate--tRNA ligase from Xanthomonas campestris pv. campestris (strain B100).